A 204-amino-acid polypeptide reads, in one-letter code: Ribonuclease HII (204 aa).

Positions 17–204 constitute an RNase H type-2 domain; that stretch reads QLVAGVDEVG…KPVQQLLQGD (188 aa). A divalent metal cation is bound by residues aspartate 23, glutamate 24, and aspartate 115.

It belongs to the RNase HII family. Mn(2+) is required as a cofactor. It depends on Mg(2+) as a cofactor.

It localises to the cytoplasm. The catalysed reaction is Endonucleolytic cleavage to 5'-phosphomonoester.. Functionally, endonuclease that specifically degrades the RNA of RNA-DNA hybrids. The chain is Ribonuclease HII from Hahella chejuensis (strain KCTC 2396).